Here is a 104-residue protein sequence, read N- to C-terminus: Integration host factor subunit beta (104 aa).

The protein belongs to the bacterial histone-like protein family. Heterodimer of an alpha and a beta chain.

Its function is as follows. This protein is one of the two subunits of integration host factor, a specific DNA-binding protein that functions in genetic recombination as well as in transcriptional and translational control. This chain is Integration host factor subunit beta, found in Xylella fastidiosa (strain M23).